The chain runs to 267 residues: 5'-nucleotidase SurE (267 aa).

The a divalent metal cation site is built by Asp9, Asp10, Ser40, and Asn97.

It belongs to the SurE nucleotidase family. Requires a divalent metal cation as cofactor.

The protein localises to the cytoplasm. The enzyme catalyses a ribonucleoside 5'-phosphate + H2O = a ribonucleoside + phosphate. In terms of biological role, nucleotidase that shows phosphatase activity on nucleoside 5'-monophosphates. The protein is 5'-nucleotidase SurE of Helicobacter pylori (strain HPAG1).